The chain runs to 278 residues: Cytidine kinase (278 aa).

T203 to G208 contributes to the ATP binding site. D237 functions as the Proton acceptor in the catalytic mechanism.

This sequence belongs to the carbohydrate kinase PfkB family. Mg(2+) serves as cofactor.

The enzyme catalyses cytidine + ATP = CMP + ADP + H(+). Its function is as follows. Involved in nucleoside degradation. Phosphorylates cytidine to CMP. Can also act on deoxycytidine and uridine, but is most active with cytidine. ATP is the most preferred phosphate donor, but it can also use GTP, CTP or UTP. In Thermococcus kodakarensis (strain ATCC BAA-918 / JCM 12380 / KOD1) (Pyrococcus kodakaraensis (strain KOD1)), this protein is Cytidine kinase.